The primary structure comprises 390 residues: tRNA(Met) cytidine acetate ligase (390 aa).

Residues 7–20 (VVEY…HKLH), G101, N162, and R187 contribute to the ATP site.

The protein belongs to the TmcAL family.

The protein localises to the cytoplasm. It carries out the reaction cytidine(34) in elongator tRNA(Met) + acetate + ATP = N(4)-acetylcytidine(34) in elongator tRNA(Met) + AMP + diphosphate. Its function is as follows. Catalyzes the formation of N(4)-acetylcytidine (ac(4)C) at the wobble position of elongator tRNA(Met), using acetate and ATP as substrates. First activates an acetate ion to form acetyladenylate (Ac-AMP) and then transfers the acetyl group to tRNA to form ac(4)C34. The protein is tRNA(Met) cytidine acetate ligase of Listeria monocytogenes serovar 1/2a (strain ATCC BAA-679 / EGD-e).